A 155-amino-acid chain; its full sequence is Superoxide dismutase [Cu-Zn] (155 aa).

Residues H47, H49, and H64 each coordinate Cu cation. Cysteines 58 and 147 form a disulfide. The Zn(2+) site is built by H64, H72, H81, and D84. A Cu cation-binding site is contributed by H121. R144 serves as a coordination point for substrate.

This sequence belongs to the Cu-Zn superoxide dismutase family. In terms of assembly, homodimer. Cu cation serves as cofactor. It depends on Zn(2+) as a cofactor.

Its subcellular location is the cytoplasm. The enzyme catalyses 2 superoxide + 2 H(+) = H2O2 + O2. In terms of biological role, destroys radicals which are normally produced within the cells and which are toxic to biological systems. The polypeptide is Superoxide dismutase [Cu-Zn] (SOD1) (Kluyveromyces lactis (strain ATCC 8585 / CBS 2359 / DSM 70799 / NBRC 1267 / NRRL Y-1140 / WM37) (Yeast)).